A 343-amino-acid chain; its full sequence is tRNA N6-adenosine threonylcarbamoyltransferase (343 aa).

Residues His120 and His124 each contribute to the Fe cation site. Residues 142-146 (VVSGG), Asp175, Gly188, Asp192, and Asn281 each bind substrate. Asp310 is a Fe cation binding site.

The protein belongs to the KAE1 / TsaD family. Requires Fe(2+) as cofactor.

It localises to the cytoplasm. The catalysed reaction is L-threonylcarbamoyladenylate + adenosine(37) in tRNA = N(6)-L-threonylcarbamoyladenosine(37) in tRNA + AMP + H(+). Required for the formation of a threonylcarbamoyl group on adenosine at position 37 (t(6)A37) in tRNAs that read codons beginning with adenine. Is involved in the transfer of the threonylcarbamoyl moiety of threonylcarbamoyl-AMP (TC-AMP) to the N6 group of A37, together with TsaE and TsaB. TsaD likely plays a direct catalytic role in this reaction. This chain is tRNA N6-adenosine threonylcarbamoyltransferase, found in Bacillus cereus (strain ATCC 14579 / DSM 31 / CCUG 7414 / JCM 2152 / NBRC 15305 / NCIMB 9373 / NCTC 2599 / NRRL B-3711).